The following is a 167-amino-acid chain: Protein-export protein SecB (167 aa).

This sequence belongs to the SecB family. Homotetramer, a dimer of dimers. One homotetramer interacts with 1 SecA dimer.

It localises to the cytoplasm. Its function is as follows. One of the proteins required for the normal export of preproteins out of the cell cytoplasm. It is a molecular chaperone that binds to a subset of precursor proteins, maintaining them in a translocation-competent state. It also specifically binds to its receptor SecA. The chain is Protein-export protein SecB from Wolbachia pipientis subsp. Culex pipiens (strain wPip).